A 73-amino-acid chain; its full sequence is Metallothionein-like protein type 2 (73 aa).

It belongs to the metallothionein superfamily. Type 15 family.

Its function is as follows. Metallothioneins have a high content of cysteine residues that bind various heavy metals. This chain is Metallothionein-like protein type 2, found in Solanum lycopersicum (Tomato).